Reading from the N-terminus, the 233-residue chain is MTKLSKRVKAIQSKVDRNKFYPLEDALNLVKECATAKFDESIDVAVQLGIDAKKSDQVVRGAVVLPAGTGKHVRVAVFAQGEKAEQAKAAGAEIVGMEELAEQIKGGKIDFDILIASPDTMKIVGTLGQVLGPRGLMPNPKVGTVTPDVATAVKNAKAGQVQFRVDKAGIVHASIGRRSFEPAALKSNLLALLEALNKAKPPASKGIYLKKVAVSSTMGAGVRVDQASLQAAA.

Belongs to the universal ribosomal protein uL1 family. Part of the 50S ribosomal subunit.

Binds directly to 23S rRNA. The L1 stalk is quite mobile in the ribosome, and is involved in E site tRNA release. In terms of biological role, protein L1 is also a translational repressor protein, it controls the translation of the L11 operon by binding to its mRNA. This is Large ribosomal subunit protein uL1 from Polynucleobacter asymbioticus (strain DSM 18221 / CIP 109841 / QLW-P1DMWA-1) (Polynucleobacter necessarius subsp. asymbioticus).